The following is a 119-amino-acid chain: Large ribosomal subunit protein uL14 (119 aa).

This sequence belongs to the universal ribosomal protein uL14 family. Part of the 50S ribosomal subunit. Forms a cluster with proteins L3 and L19. In the 70S ribosome, L14 and L19 interact and together make contacts with the 16S rRNA in bridges B5 and B8.

Its function is as follows. Binds to 23S rRNA. Forms part of two intersubunit bridges in the 70S ribosome. The protein is Large ribosomal subunit protein uL14 of Anaplasma marginale (strain St. Maries).